Here is a 360-residue protein sequence, read N- to C-terminus: MRLLENLWGKKPSRKSDKKKKGSSNYAYAVTRVRAMKSKLLPKESYPRLLNMGIDEITRFIQESEYKNDVDELAMKYSGGDLAEHALNRNLALTYDKLVRITSGELNYLIVAYLKRYDIWNIKTLLRGKIYNASVEDILESLIAAGEFTYTSMSELAAKATYQEIVEALKHTEYYPLLQKFDGTNLAYIENELDKIYYADLFEAIGKPRSKDRKLFAQVVRLEVDVKNLINLFRLKKAGVMQPDEIMPLMIEGGLELKIEKLAALPYDEFVNELQRTQYWEAISGVVGPDMISLTTLESRLTRYYLESSTILSHVSPITVVPILDYIIHKNNEATNLRIIFRGKETGLSDELIKDQLVII.

It belongs to the V-ATPase V0D/AC39 subunit family. In terms of assembly, has multiple subunits, A(3), B(3), C, D, E, F, G, I and K(x); there may be a few other subunits as well.

It is found in the cell membrane. Its function is as follows. Component of the A-type ATP synthase that produces ATP from ADP in the presence of a proton gradient across the membrane. The sequence is that of A-type ATP synthase subunit C from Methanosarcina mazei (strain ATCC BAA-159 / DSM 3647 / Goe1 / Go1 / JCM 11833 / OCM 88) (Methanosarcina frisia).